The chain runs to 427 residues: Histidine--tRNA ligase (427 aa).

The protein belongs to the class-II aminoacyl-tRNA synthetase family. Homodimer.

The protein localises to the cytoplasm. The enzyme catalyses tRNA(His) + L-histidine + ATP = L-histidyl-tRNA(His) + AMP + diphosphate + H(+). The polypeptide is Histidine--tRNA ligase (Aster yellows witches'-broom phytoplasma (strain AYWB)).